The chain runs to 185 residues: Protein LPA2 (185 aa).

Residues 1–46 (MALQIHSPCSFSTRPYHLFFTTRNPRFAIKCQNSQIESDTTEDPSR) constitute a chloroplast transit peptide. A disordered region spans residues 35–105 (QIESDTTEDP…VFMSEEGAAK (71 aa)). Positions 47–75 (SKNSSSSGVGFGSPASSSSPAKKLSAATS) are enriched in low complexity. Basic and acidic residues predominate over residues 83-92 (KREVNRRAPV). The next 2 helical transmembrane spans lie at 115-135 (AFLL…IILA) and 152-172 (VYPV…AYGV).

It localises to the plastid. The protein resides in the chloroplast membrane. This chain is Protein LPA2, found in Arabidopsis thaliana (Mouse-ear cress).